Here is a 186-residue protein sequence, read N- to C-terminus: Lumazine protein (186 aa).

Lumazine-binding repeat units lie at residues 1-96 (MFRG…VGRG) and 97-186 (GLTG…LNEW).

6,7-dimethyl-8-(1-D-ribityl)lumazine serves as cofactor.

In terms of biological role, antenna protein that modulates the color of the bioluminescence emission of the luciferase. In the presence of LumP, luciferase emission is shifted to higher energy values (shorter wavelength). The sequence is that of Lumazine protein (lumP) from Photobacterium leiognathi.